A 305-amino-acid polypeptide reads, in one-letter code: Alpha-N-acetylgalactosaminide alpha-2,6-sialyltransferase 3 (305 aa).

At 1–8 the chain is on the cytoplasmic side; sequence MACILKRK. Residues 9 to 29 form a helical; Signal-anchor for type II membrane protein membrane-spanning segment; it reads PALAVSFIALCILLLAMRLAN. At 30 to 305 the chain is on the lumenal side; it reads DVTFPLLLNC…VFTHPNWTVS (276 aa). An intrachain disulfide couples cysteine 80 to cysteine 229. 2 N-linked (GlcNAc...) asparagine glycosylation sites follow: asparagine 239 and asparagine 301.

Belongs to the glycosyltransferase 29 family. In terms of tissue distribution, in adults it is highly expressed in spleen, followed by kidney and lesser in lung. Not found in liver and skeletal muscle. In newborns it is abundantly expressed in brain and kidney.

The protein localises to the golgi apparatus membrane. The enzyme catalyses an alpha-Neu5Ac-(2-&gt;3)-beta-D-Gal-(1-&gt;3)-D-GlcNAc derivative + CMP-N-acetyl-beta-neuraminate = an alpha-Neu5Ac-(2-&gt;3)-beta-D-Gal-(1-&gt;3)-[alpha-Neu5Ac-(2-&gt;6)]-D-GlcNAc derivative + CMP + H(+). The catalysed reaction is a ganglioside GM1b + CMP-N-acetyl-beta-neuraminate = a ganglioside GD1alpha + CMP + H(+). It catalyses the reaction a ganglioside GM1b (d18:1(4E)) + CMP-N-acetyl-beta-neuraminate = a ganglioside GD1alpha (d18:1(4E)) + CMP + H(+). It carries out the reaction a globoside MSGG + CMP-N-acetyl-beta-neuraminate = a globoside DSGG + CMP + H(+). The enzyme catalyses 3-O-[alpha-Neu5Ac-(2-&gt;3)-beta-D-Gal-(1-&gt;3)-alpha-D-GalNAc]-L-Ser-[protein] + CMP-N-acetyl-beta-neuraminate = a 3-O-{alpha-Neu5Ac-(2-&gt;3)-beta-D-Gal-(1-&gt;3)-[alpha-Neu5Ac-(2-&gt;6)]-alpha-D-GalNAc}-L-seryl-[protein] + CMP + H(+). The catalysed reaction is 3-O-[alpha-Neu5Ac-(2-&gt;3)-beta-D-Gal-(1-&gt;3)-alpha-D-GalNAc]-L-Thr-[protein] + CMP-N-acetyl-beta-neuraminate = a 3-O-{alpha-Neu5Ac-(2-&gt;3)-beta-D-Gal-(1-&gt;3)-[alpha-Neu5Ac-(2-&gt;6)]-alpha-D-GalNAc}-L-threonyl-[protein] + CMP + H(+). The protein operates within protein modification; protein glycosylation. It functions in the pathway glycolipid biosynthesis. Functionally, transfers the sialyl group (N-acetyl-alpha-neuraminyl or NeuAc) from CMP-NeuAc to the GalNAc residue on the NeuAc-alpha-2,3-Gal-beta-1,3-GalNAc sequence of glycoproteins and glycolipids forming an alpha-2,6-linkage. Produces branched type disialyl structures by transfer of a sialyl group onto a GalNAc residue inside the backbone core chains. ST6GalNAcIII prefers glycolipids to glycoproteins, predominantly catalyzing the biosynthesis of ganglioside GD1alpha from GM1b. GD1alpha is a critical molecule in the communication and interaction between neuronal cells and their supportive cells, particularly in brain tissues, and functions as an adhesion molecule in the process of metastasis. Sialylation of glycoproteins or glycosphingolipids is very important in tumor development, neuronal development, nerve repair, immunological processes and regulation of hormone sensitivity. The sequence is that of Alpha-N-acetylgalactosaminide alpha-2,6-sialyltransferase 3 (St6galnac3) from Rattus norvegicus (Rat).